The primary structure comprises 867 residues: Xylosyltransferase 2 (867 aa).

The Cytoplasmic portion of the chain corresponds to M1–K15. The helical; Signal-anchor for type II membrane protein transmembrane segment at L16–S36 threads the bilayer. At V37 to R867 the chain is on the lumenal side. The tract at residues D41 to N122 is disordered. Residues R53–D65 are compositionally biased toward basic and acidic residues. A compositionally biased stretch (basic residues) spans S73 to R82. A glycan (N-linked (GlcNAc...) asparagine) is linked at N122. Disulfide bonds link C161/C189 and C205/C447. Residues V238, D266, and T295–W297 contribute to the UDP-alpha-D-xylose site. N-linked (GlcNAc...) asparagine glycosylation is present at N326. UDP-alpha-D-xylose is bound by residues D399–W400, S480, and R503–K504. Cystine bridges form between C580/C835 and C828/C841. N685 is a glycosylation site (N-linked (GlcNAc...) asparagine).

The protein belongs to the glycosyltransferase 14 family. XylT subfamily. In terms of assembly, monomer. Mg(2+) is required as a cofactor. The cofactor is Mn(2+). Contains disulfide bonds.

Its subcellular location is the golgi apparatus membrane. The protein localises to the secreted. It carries out the reaction UDP-alpha-D-xylose + L-seryl-[protein] = 3-O-(beta-D-xylosyl)-L-seryl-[protein] + UDP + H(+). The protein operates within glycan metabolism; chondroitin sulfate biosynthesis. Its pathway is glycan metabolism; heparan sulfate biosynthesis. In terms of biological role, catalyzes the first step in the biosynthesis of chondroitin sulfate, heparan sulfate and dermatan sulfate proteoglycans, such as DCN. Transfers D-xylose from UDP-D-xylose to specific serine residues of the core protein. This Bos taurus (Bovine) protein is Xylosyltransferase 2 (XYLT2).